Consider the following 215-residue polypeptide: ATP-dependent dethiobiotin synthetase BioD (215 aa).

ATP is bound at residue 13 to 18; it reads DIGKTV. T17 contributes to the Mg(2+) binding site. K38 is an active-site residue. T42 contributes to the substrate binding site. Residues D50, 115–118, and 175–176 each bind ATP; these read EGAG and NH. Residues D50 and E115 each contribute to the Mg(2+) site.

Belongs to the dethiobiotin synthetase family. As to quaternary structure, homodimer. Mg(2+) is required as a cofactor.

The protein localises to the cytoplasm. The catalysed reaction is (7R,8S)-7,8-diammoniononanoate + CO2 + ATP = (4R,5S)-dethiobiotin + ADP + phosphate + 3 H(+). It participates in cofactor biosynthesis; biotin biosynthesis; biotin from 7,8-diaminononanoate: step 1/2. Catalyzes a mechanistically unusual reaction, the ATP-dependent insertion of CO2 between the N7 and N8 nitrogen atoms of 7,8-diaminopelargonic acid (DAPA, also called 7,8-diammoniononanoate) to form a ureido ring. This chain is ATP-dependent dethiobiotin synthetase BioD, found in Neisseria gonorrhoeae (strain NCCP11945).